The chain runs to 457 residues: Argininosuccinate lyase (457 aa).

It belongs to the lyase 1 family. Argininosuccinate lyase subfamily.

Its subcellular location is the cytoplasm. The catalysed reaction is 2-(N(omega)-L-arginino)succinate = fumarate + L-arginine. It participates in amino-acid biosynthesis; L-arginine biosynthesis; L-arginine from L-ornithine and carbamoyl phosphate: step 3/3. The polypeptide is Argininosuccinate lyase (Escherichia coli O9:H4 (strain HS)).